The primary structure comprises 328 residues: P2Y purinoceptor 6 (328 aa).

Topologically, residues 1–27 (MERDNGTIQAPGLPPTTCVYREDFKRL) are extracellular. Asn-5 carries N-linked (GlcNAc...) asparagine glycosylation. The helical transmembrane segment at 28–48 (LLPPVYSVVLVVGLPLNVCVI) threads the bilayer. At 49–62 (AQICASRRTLTRSA) the chain is on the cytoplasmic side. Residues 63–83 (VYTLNLALADLLYACSLPLLI) traverse the membrane as a helical segment. Residues 84-101 (YNYARGDHWPFGDLACRL) lie on the Extracellular side of the membrane. A disulfide bridge links Cys-99 with Cys-177. A helical membrane pass occupies residues 102–122 (VRFLFYANLHGSILFLTCISF). Topologically, residues 123–144 (QRYLGICHPLAPWHKRGGRRAA) are cytoplasmic. The helical transmembrane segment at 145–165 (WVVCGVVWLVVTAQCLPTAVF) threads the bilayer. Residues 166-194 (AATGIQRNRTVCYDLSPPILSTRYLPYGM) are Extracellular-facing. Asn-173 is a glycosylation site (N-linked (GlcNAc...) asparagine). The chain crosses the membrane as a helical span at residues 195 to 215 (ALTVIGFLLPFTALLACYCRM). Residues 216 to 236 (ARRLCRQDGPAGPVAQERRSK) are Cytoplasmic-facing. A helical transmembrane segment spans residues 237–257 (AARMAVVVAAVFVISFLPFHI). Topologically, residues 258-280 (TKTAYLAVRSTPGVSCPVLETFA) are extracellular. Residues 281–303 (AAYKGTRPFASANSVLDPILFYF) form a helical membrane-spanning segment. Residues 304-328 (TQQKFRRQPHDLLQKLTAKWQRQRV) lie on the Cytoplasmic side of the membrane.

This sequence belongs to the G-protein coupled receptor 1 family. In terms of tissue distribution, abundantly expressed in various tissues including lung, stomach, intestine, spleen, mesentery, heart, and, most prominently, aorta.

The protein resides in the cell membrane. In terms of biological role, receptor for extracellular UTP &gt; ADP = 2-methylthio-ATP &gt; ADP-beta-S &gt; ATP = ATP-gamma-S. The activity of this receptor is mediated by G proteins which activate a phosphatidylinositol-calcium second messenger system. Functionally coupled to phospholipase C. The polypeptide is P2Y purinoceptor 6 (P2ry6) (Rattus norvegicus (Rat)).